We begin with the raw amino-acid sequence, 435 residues long: Serine--tRNA ligase (435 aa).

234–236 (TAE) lines the L-serine pocket. 265–267 (RRE) lines the ATP pocket. Glutamate 288 serves as a coordination point for L-serine. An ATP-binding site is contributed by 352 to 355 (EISS). Serine 388 is an L-serine binding site.

It belongs to the class-II aminoacyl-tRNA synthetase family. Type-1 seryl-tRNA synthetase subfamily. Homodimer. The tRNA molecule binds across the dimer.

The protein resides in the cytoplasm. It carries out the reaction tRNA(Ser) + L-serine + ATP = L-seryl-tRNA(Ser) + AMP + diphosphate + H(+). The catalysed reaction is tRNA(Sec) + L-serine + ATP = L-seryl-tRNA(Sec) + AMP + diphosphate + H(+). Its pathway is aminoacyl-tRNA biosynthesis; selenocysteinyl-tRNA(Sec) biosynthesis; L-seryl-tRNA(Sec) from L-serine and tRNA(Sec): step 1/1. In terms of biological role, catalyzes the attachment of serine to tRNA(Ser). Is also able to aminoacylate tRNA(Sec) with serine, to form the misacylated tRNA L-seryl-tRNA(Sec), which will be further converted into selenocysteinyl-tRNA(Sec). The sequence is that of Serine--tRNA ligase from Synechococcus sp. (strain JA-3-3Ab) (Cyanobacteria bacterium Yellowstone A-Prime).